A 111-amino-acid polypeptide reads, in one-letter code: Wound-induced proteinase inhibitor 1 (111 aa).

The N-terminal stretch at 1–23 (MESKFAHIIVFFLLATSFETLMA) is a signal peptide. Positions 24 to 36 (RKEIDGPEVIELL) are excised as a propeptide.

Belongs to the protease inhibitor I13 (potato type I serine protease inhibitor) family.

The protein localises to the secreted. This Solanum lycopersicum (Tomato) protein is Wound-induced proteinase inhibitor 1 (PIIF).